We begin with the raw amino-acid sequence, 275 residues long: Large ribosomal subunit protein uL2 (275 aa).

A disordered region spans residues 223-275 (VAMNPVDHPHGGGEGRTGEAREPVSPWGTPSKGFKTRRNKRTNNMIVQRRKRK). Positions 229–244 (DHPHGGGEGRTGEARE) are enriched in basic and acidic residues.

This sequence belongs to the universal ribosomal protein uL2 family. As to quaternary structure, part of the 50S ribosomal subunit. Forms a bridge to the 30S subunit in the 70S ribosome.

Its function is as follows. One of the primary rRNA binding proteins. Required for association of the 30S and 50S subunits to form the 70S ribosome, for tRNA binding and peptide bond formation. It has been suggested to have peptidyltransferase activity; this is somewhat controversial. Makes several contacts with the 16S rRNA in the 70S ribosome. This is Large ribosomal subunit protein uL2 from Bordetella petrii (strain ATCC BAA-461 / DSM 12804 / CCUG 43448).